Here is a 245-residue protein sequence, read N- to C-terminus: Carbohydrate deacetylase (245 aa).

Mg(2+)-binding residues include H59 and H125.

This sequence belongs to the YdjC deacetylase family. In terms of assembly, homodimer. It depends on Mg(2+) as a cofactor.

Functionally, probably catalyzes the deacetylation of acetylated carbohydrates an important step in the degradation of oligosaccharides. The polypeptide is Carbohydrate deacetylase (Listeria monocytogenes serotype 4a (strain HCC23)).